Reading from the N-terminus, the 360-residue chain is Photosystem II protein D1 (360 aa).

3 consecutive transmembrane segments (helical) span residues 29–46, 118–133, and 142–156; these read YIGWFGVVMIPTLLTATS, HFLLGVCCYIGREWEF, and WISVAFTAPVVAASA. H118 contributes to the chlorophyll a binding site. Y126 contributes to the pheophytin a binding site. [CaMn4O5] cluster contacts are provided by D170 and E189. The helical transmembrane segment at 197–218 threads the bilayer; the sequence is LHQLGVAGVFGGSLFSAMHGSL. Residue H198 participates in chlorophyll a binding. A quinone is bound by residues H215 and 264-265; that span reads SF. A Fe cation-binding site is contributed by H215. Residue H272 participates in Fe cation binding. The chain crosses the membrane as a helical span at residues 274 to 288; sequence FLGLWPVVGIWFTSM. Positions 332, 333, 342, and 344 each coordinate [CaMn4O5] cluster. A propeptide spanning residues 345–360 is cleaved from the precursor; it reads SNESLPLALVAPAING.

It belongs to the reaction center PufL/M/PsbA/D family. In terms of assembly, PSII is composed of 1 copy each of membrane proteins PsbA, PsbB, PsbC, PsbD, PsbE, PsbF, PsbH, PsbI, PsbJ, PsbK, PsbL, PsbM, PsbT, PsbX, PsbY, PsbZ, Psb30/Ycf12, at least 3 peripheral proteins of the oxygen-evolving complex and a large number of cofactors. It forms dimeric complexes. Requires The D1/D2 heterodimer binds P680, chlorophylls that are the primary electron donor of PSII, and subsequent electron acceptors. It shares a non-heme iron and each subunit binds pheophytin, quinone, additional chlorophylls, carotenoids and lipids. D1 provides most of the ligands for the Mn4-Ca-O5 cluster of the oxygen-evolving complex (OEC). There is also a Cl(-1) ion associated with D1 and D2, which is required for oxygen evolution. The PSII complex binds additional chlorophylls, carotenoids and specific lipids. as cofactor. Tyr-161 forms a radical intermediate that is referred to as redox-active TyrZ, YZ or Y-Z. In terms of processing, C-terminally processed by CTPA; processing is essential to allow assembly of the oxygen-evolving complex and thus photosynthetic growth.

The protein resides in the plastid. It localises to the chloroplast thylakoid membrane. It carries out the reaction 2 a plastoquinone + 4 hnu + 2 H2O = 2 a plastoquinol + O2. In terms of biological role, photosystem II (PSII) is a light-driven water:plastoquinone oxidoreductase that uses light energy to abstract electrons from H(2)O, generating O(2) and a proton gradient subsequently used for ATP formation. It consists of a core antenna complex that captures photons, and an electron transfer chain that converts photonic excitation into a charge separation. The D1/D2 (PsbA/PsbD) reaction center heterodimer binds P680, the primary electron donor of PSII as well as several subsequent electron acceptors. The chain is Photosystem II protein D1 from Antithamnion sp. (Red alga).